A 151-amino-acid chain; its full sequence is Small ribosomal subunit protein uS15 (151 aa).

This sequence belongs to the universal ribosomal protein uS15 family.

This Spodoptera frugiperda (Fall armyworm) protein is Small ribosomal subunit protein uS15 (RpS13).